A 525-amino-acid polypeptide reads, in one-letter code: Bifunctional purine biosynthesis protein PurH (525 aa).

An MGS-like domain is found at 1 to 148 (MPSNNLIKNA…KNYKNVIVIV (148 aa)).

This sequence belongs to the PurH family.

The catalysed reaction is (6R)-10-formyltetrahydrofolate + 5-amino-1-(5-phospho-beta-D-ribosyl)imidazole-4-carboxamide = 5-formamido-1-(5-phospho-D-ribosyl)imidazole-4-carboxamide + (6S)-5,6,7,8-tetrahydrofolate. The enzyme catalyses IMP + H2O = 5-formamido-1-(5-phospho-D-ribosyl)imidazole-4-carboxamide. The protein operates within purine metabolism; IMP biosynthesis via de novo pathway; 5-formamido-1-(5-phospho-D-ribosyl)imidazole-4-carboxamide from 5-amino-1-(5-phospho-D-ribosyl)imidazole-4-carboxamide (10-formyl THF route): step 1/1. Its pathway is purine metabolism; IMP biosynthesis via de novo pathway; IMP from 5-formamido-1-(5-phospho-D-ribosyl)imidazole-4-carboxamide: step 1/1. This chain is Bifunctional purine biosynthesis protein PurH, found in Buchnera aphidicola subsp. Acyrthosiphon pisum (strain 5A).